A 401-amino-acid polypeptide reads, in one-letter code: Imidazolonepropionase (401 aa).

Fe(3+) is bound by residues His-70 and His-72. Positions 70 and 72 each coordinate Zn(2+). 4-imidazolone-5-propanoate contacts are provided by Arg-79, Tyr-142, and His-175. N-formimidoyl-L-glutamate is bound at residue Tyr-142. Residue His-238 coordinates Fe(3+). His-238 provides a ligand contact to Zn(2+). Gln-241 provides a ligand contact to 4-imidazolone-5-propanoate. Asp-313 serves as a coordination point for Fe(3+). Zn(2+) is bound at residue Asp-313. Residues Asn-315 and Gly-317 each contribute to the N-formimidoyl-L-glutamate site. Thr-318 serves as a coordination point for 4-imidazolone-5-propanoate.

Belongs to the metallo-dependent hydrolases superfamily. HutI family. It depends on Zn(2+) as a cofactor. Requires Fe(3+) as cofactor.

The protein localises to the cytoplasm. The enzyme catalyses 4-imidazolone-5-propanoate + H2O = N-formimidoyl-L-glutamate. It participates in amino-acid degradation; L-histidine degradation into L-glutamate; N-formimidoyl-L-glutamate from L-histidine: step 3/3. Its function is as follows. Catalyzes the hydrolytic cleavage of the carbon-nitrogen bond in imidazolone-5-propanoate to yield N-formimidoyl-L-glutamate. It is the third step in the universal histidine degradation pathway. This chain is Imidazolonepropionase, found in Xanthomonas euvesicatoria pv. vesicatoria (strain 85-10) (Xanthomonas campestris pv. vesicatoria).